The following is a 313-amino-acid chain: Cyclin-dependent kinase B2-1 (313 aa).

At Met-1 the chain carries N-acetylmethionine. The Protein kinase domain occupies 14–304 (FEKLEKVGEG…AKMAMEHPYF (291 aa)). Residues 20–28 (VGEGTYGKV) and Lys-43 contribute to the ATP site. Phosphotyrosine is present on Tyr-25. The active-site Proton acceptor is the Asp-145. Thr-179 bears the Phosphothreonine mark.

This sequence belongs to the protein kinase superfamily. CMGC Ser/Thr protein kinase family. CDC2/CDKX subfamily. In terms of assembly, interacts with CYCD4-1 and CKS1. Expressed in root tips, shoot apical meristem, leaf primordia vascular tissues and tapetum of anthers.

The catalysed reaction is L-seryl-[protein] + ATP = O-phospho-L-seryl-[protein] + ADP + H(+). It carries out the reaction L-threonyl-[protein] + ATP = O-phospho-L-threonyl-[protein] + ADP + H(+). The enzyme catalyses [DNA-directed RNA polymerase] + ATP = phospho-[DNA-directed RNA polymerase] + ADP + H(+). This Arabidopsis thaliana (Mouse-ear cress) protein is Cyclin-dependent kinase B2-1 (CDKB2-1).